The primary structure comprises 860 residues: Receptor-like protein 31 (860 aa).

A signal peptide spans 1 to 23 (MMIPSQSCFCFFFMVSFFLHTLA). The Extracellular segment spans residues 24–809 (SPTLRHCRHD…SEPEEHVINW (786 aa)). N-linked (GlcNAc...) asparagine glycans are attached at residues Asn-49, Asn-64, Asn-88, Asn-95, Asn-112, Asn-117, Asn-154, Asn-178, Asn-202, and Asn-213. LRR repeat units follow at residues 108–131 (QHLH…LGNL), 132–155 (FRLT…IGNL), 156–179 (SRLT…IGNL), 181–202 (QLEY…TFSN), 203–226 (LTKL…DMSG), and 227–251 (FQNL…LFTI). The LRR 7; degenerate repeat unit spans residues 252–276 (PSLRWANLEGNMFKGPIEFRNMYSP). LRR repeat units lie at residues 277 to 301 (STRL…LSQY), 302 to 325 (LNLI…LFTI), 326 to 349 (PTLE…NMSS), 350 to 374 (SSSL…VSQY), 376 to 398 (NLEE…ISKL), 400 to 419 (KLEY…PSWL), 420 to 444 (WRLT…GLDE), 446 to 468 (QVQW…ICKL), 469 to 494 (RSLE…SFMV), 496 to 517 (LTDL…FVNA), 518 to 541 (TKLL…LIHC), 543 to 564 (AMQL…WLGS), 565 to 591 (LPSL…SIGF), and 592 to 615 (QSLR…YFSS). N-linked (GlcNAc...) asparagine glycans are attached at residues Asn-313, Asn-346, and Asn-364. The N-linked (GlcNAc...) asparagine glycan is linked to Asn-429. 3 N-linked (GlcNAc...) asparagine glycosylation sites follow: Asn-482, Asn-503, and Asn-516. Residues Asn-642, Asn-673, and Asn-697 are each glycosylated (N-linked (GlcNAc...) asparagine). LRR repeat units lie at residues 665–690 (INEE…IGLL), 691–714 (KELR…LANL), 716–738 (KLEA…LGSL), and 740–763 (FMST…QFQG). N-linked (GlcNAc...) asparagine glycosylation is found at Asn-745 and Asn-765. A helical membrane pass occupies residues 810 to 830 (IAAGIAYGPGVVCGLVIGHIF). Residues 831-860 (LSHKHECWFMEKFRRKKPKVVTRIARPSKH) are Cytoplasmic-facing.

The protein belongs to the RLP family.

It is found in the cell membrane. The polypeptide is Receptor-like protein 31 (Arabidopsis thaliana (Mouse-ear cress)).